We begin with the raw amino-acid sequence, 231 residues long: NADH-ubiquinone oxidoreductase chain 4 (231 aa).

Transmembrane regions (helical) follow at residues 1-21 (PIAG…YGII), 34-54 (LFLP…LTCL), 63-85 (IAYS…TPWG), 89-111 (AMAL…NTTY), 128-148 (ILPM…AIPP), 156-176 (LLIM…LGLS), and 211-231 (LLIA…ELVI).

Belongs to the complex I subunit 4 family.

It localises to the mitochondrion membrane. It catalyses the reaction a ubiquinone + NADH + 5 H(+)(in) = a ubiquinol + NAD(+) + 4 H(+)(out). Core subunit of the mitochondrial membrane respiratory chain NADH dehydrogenase (Complex I) that is believed to belong to the minimal assembly required for catalysis. Complex I functions in the transfer of electrons from NADH to the respiratory chain. The immediate electron acceptor for the enzyme is believed to be ubiquinone. This is NADH-ubiquinone oxidoreductase chain 4 (MT-ND4) from Crotalus adamanteus (Eastern diamondback rattlesnake).